The primary structure comprises 372 residues: Partitioning defective 6 homolog beta (372 aa).

Phosphoserine is present on Ser-11. The region spanning 16-96 (TMEVKSKFGA…PLLRIFIQKK (81 aa)) is the PB1 domain. Residues 126–253 (RKKPHIVISM…ITVRPANQRN (128 aa)) are interaction with PARD3 and CDC42. Residues 133 to 150 (ISMPQDFRPVSSIIDVDI) enclose the Pseudo-CRIB domain. Residues 157-250 (RVRLYKYGTE…NLIITVRPAN (94 aa)) form the PDZ domain. Residues 253–272 (NNVVRNSRTSGSSGQSTDNS) show a composition bias toward polar residues. The tract at residues 253–292 (NNVVRNSRTSGSSGQSTDNSLLGYPQQIEPSFEPEDEDSE) is disordered.

It belongs to the PAR6 family. Interacts with PARD3. Interacts with GTP-bound forms of CDC42 and RAC1. Interacts with GTP-bound RHOQ/TC10. Interacts with PALS1. Interacts with the N-terminal part of PRKCI and PRKCZ. Part of a complex with PARD3, CDC42 or RAC1 and PRKCI or PRKCZ. Part of a complex with LLGL1 and PRKCI. Interacts with PARD3B. Interacts with ECT2. In terms of tissue distribution, expressed in pancreas and in both adult and fetal kidney. Weakly expressed in placenta and lung. Not expressed in other tissues.

It localises to the cytoplasm. Its subcellular location is the cell membrane. It is found in the cell junction. The protein localises to the tight junction. Functionally, adapter protein involved in asymmetrical cell division and cell polarization processes. Probably involved in formation of epithelial tight junctions. Association with PARD3 may prevent the interaction of PARD3 with F11R/JAM1, thereby preventing tight junction assembly. The PARD6-PARD3 complex links GTP-bound Rho small GTPases to atypical protein kinase C proteins. The sequence is that of Partitioning defective 6 homolog beta (PARD6B) from Homo sapiens (Human).